We begin with the raw amino-acid sequence, 199 residues long: Recombination protein RecR (199 aa).

The segment at 57-72 adopts a C4-type zinc-finger fold; it reads CQSCRTFTEQDLCPIC. The Toprim domain maps to 81–176; sequence GIICVVETPA…VISRIAHGVP (96 aa).

It belongs to the RecR family.

In terms of biological role, may play a role in DNA repair. It seems to be involved in an RecBC-independent recombinational process of DNA repair. It may act with RecF and RecO. The chain is Recombination protein RecR from Shewanella frigidimarina (strain NCIMB 400).